The primary structure comprises 124 residues: Putative RNA polymerase II transcriptional coactivator (124 aa).

A disordered region spans residues 1-61 (MSSSSSSEDE…GRLKDSDGNE (61 aa)). Composition is skewed to basic and acidic residues over residues 11–21 (LEKKVTKEQKK) and 39–58 (QEVK…KDSD).

The protein belongs to the transcriptional coactivator PC4 family.

The protein localises to the nucleus. Its function is as follows. General coactivator that functions cooperatively with TAFs and mediates functional interactions between upstream activators and the general transcriptional machinery. Binds single-stranded DNA. This is Putative RNA polymerase II transcriptional coactivator from Caenorhabditis elegans.